Reading from the N-terminus, the 131-residue chain is Global transcriptional regulator Spx (131 aa).

Cys10 and Cys13 are disulfide-bonded.

This sequence belongs to the ArsC family. Spx subfamily. In terms of assembly, interacts with the C-terminal domain of the alpha subunit of the RNAP.

Its subcellular location is the cytoplasm. In terms of biological role, global transcriptional regulator that plays a key role in stress response and exerts either positive or negative regulation of genes. Acts by interacting with the C-terminal domain of the alpha subunit of the RNA polymerase (RNAP). This interaction can enhance binding of RNAP to the promoter region of target genes and stimulate their transcription, or block interaction of RNAP with activator. This is Global transcriptional regulator Spx from Listeria innocua serovar 6a (strain ATCC BAA-680 / CLIP 11262).